Consider the following 154-residue polypeptide: Snaclec dabocetin subunit alpha (154 aa).

The signal sequence occupies residues 1–23 (MGRFISVSFGLLVVFLSLSGTGA). 3 cysteine pairs are disulfide-bonded: C25–C36, C53–C148, and C123–C140. In terms of domain architecture, C-type lectin spans 32–149 (HEGHCYKVFK…CGDKNPFICK (118 aa)).

It belongs to the snaclec family. As to quaternary structure, heterodimer of subunits alpha and beta; disulfide-linked. Expressed by the venom gland.

It is found in the secreted. Inhibits ristocetin-induced platelet aggregation via binding to platelet glycoprotein Ibalpha (GP1BA). This chain is Snaclec dabocetin subunit alpha, found in Daboia siamensis (Eastern Russel's viper).